A 219-amino-acid chain; its full sequence is Adenylate kinase (219 aa).

12 to 17 (GAGKGT) is a binding site for ATP. Residues 32-61 (STGDMLRAAVKAGTPIGLQAKAVMDAGELV) form an NMP region. AMP-binding positions include threonine 33, arginine 38, 59–61 (ELV), 87–90 (GYPR), and glutamine 94. An LID region spans residues 128–165 (GRFSCARCGEGYHDRYKLPKVADICDVCGSKEFKRRPD). Arginine 129 is a binding site for ATP. Zn(2+)-binding residues include cysteine 132, cysteine 135, cysteine 152, and cysteine 155. Positions 162 and 174 each coordinate AMP. Residue alanine 202 coordinates ATP.

The protein belongs to the adenylate kinase family. In terms of assembly, monomer.

The protein localises to the cytoplasm. It carries out the reaction AMP + ATP = 2 ADP. The protein operates within purine metabolism; AMP biosynthesis via salvage pathway; AMP from ADP: step 1/1. In terms of biological role, catalyzes the reversible transfer of the terminal phosphate group between ATP and AMP. Plays an important role in cellular energy homeostasis and in adenine nucleotide metabolism. In Sphingopyxis alaskensis (strain DSM 13593 / LMG 18877 / RB2256) (Sphingomonas alaskensis), this protein is Adenylate kinase.